Here is a 412-residue protein sequence, read N- to C-terminus: Imidazolonepropionase (412 aa).

Residues His-76 and His-78 each coordinate Fe(3+). Zn(2+) is bound by residues His-76 and His-78. 4-imidazolone-5-propanoate is bound by residues Arg-85, Tyr-148, and His-181. Residue Tyr-148 participates in N-formimidoyl-L-glutamate binding. Fe(3+) is bound at residue His-242. His-242 is a binding site for Zn(2+). Glu-245 is a binding site for 4-imidazolone-5-propanoate. Residue Asp-317 participates in Fe(3+) binding. Asp-317 lines the Zn(2+) pocket. Asn-319 and Gly-321 together coordinate N-formimidoyl-L-glutamate. Ser-322 is a 4-imidazolone-5-propanoate binding site.

It belongs to the metallo-dependent hydrolases superfamily. HutI family. It depends on Zn(2+) as a cofactor. Fe(3+) serves as cofactor.

It is found in the cytoplasm. The enzyme catalyses 4-imidazolone-5-propanoate + H2O = N-formimidoyl-L-glutamate. Its pathway is amino-acid degradation; L-histidine degradation into L-glutamate; N-formimidoyl-L-glutamate from L-histidine: step 3/3. Catalyzes the hydrolytic cleavage of the carbon-nitrogen bond in imidazolone-5-propanoate to yield N-formimidoyl-L-glutamate. It is the third step in the universal histidine degradation pathway. The chain is Imidazolonepropionase from Staphylococcus saprophyticus subsp. saprophyticus (strain ATCC 15305 / DSM 20229 / NCIMB 8711 / NCTC 7292 / S-41).